The following is a 316-amino-acid chain: 4-hydroxy-3-methylbut-2-enyl diphosphate reductase (316 aa).

Cys-12 provides a ligand contact to [4Fe-4S] cluster. (2E)-4-hydroxy-3-methylbut-2-enyl diphosphate-binding residues include His-41 and His-74. The dimethylallyl diphosphate site is built by His-41 and His-74. Isopentenyl diphosphate contacts are provided by His-41 and His-74. Cys-96 is a [4Fe-4S] cluster binding site. His-124 lines the (2E)-4-hydroxy-3-methylbut-2-enyl diphosphate pocket. His-124 contacts dimethylallyl diphosphate. Residue His-124 coordinates isopentenyl diphosphate. Glu-126 (proton donor) is an active-site residue. Thr-167 contributes to the (2E)-4-hydroxy-3-methylbut-2-enyl diphosphate binding site. Cys-197 provides a ligand contact to [4Fe-4S] cluster. Positions 225, 226, 227, and 269 each coordinate (2E)-4-hydroxy-3-methylbut-2-enyl diphosphate. 4 residues coordinate dimethylallyl diphosphate: Ser-225, Ser-226, Asn-227, and Ser-269. Positions 225, 226, 227, and 269 each coordinate isopentenyl diphosphate.

The protein belongs to the IspH family. In terms of assembly, homodimer. Requires [4Fe-4S] cluster as cofactor.

It carries out the reaction isopentenyl diphosphate + 2 oxidized [2Fe-2S]-[ferredoxin] + H2O = (2E)-4-hydroxy-3-methylbut-2-enyl diphosphate + 2 reduced [2Fe-2S]-[ferredoxin] + 2 H(+). The enzyme catalyses dimethylallyl diphosphate + 2 oxidized [2Fe-2S]-[ferredoxin] + H2O = (2E)-4-hydroxy-3-methylbut-2-enyl diphosphate + 2 reduced [2Fe-2S]-[ferredoxin] + 2 H(+). The protein operates within isoprenoid biosynthesis; dimethylallyl diphosphate biosynthesis; dimethylallyl diphosphate from (2E)-4-hydroxy-3-methylbutenyl diphosphate: step 1/1. Its pathway is isoprenoid biosynthesis; isopentenyl diphosphate biosynthesis via DXP pathway; isopentenyl diphosphate from 1-deoxy-D-xylulose 5-phosphate: step 6/6. Catalyzes the conversion of 1-hydroxy-2-methyl-2-(E)-butenyl 4-diphosphate (HMBPP) into a mixture of isopentenyl diphosphate (IPP) and dimethylallyl diphosphate (DMAPP). Acts in the terminal step of the DOXP/MEP pathway for isoprenoid precursor biosynthesis. The polypeptide is 4-hydroxy-3-methylbut-2-enyl diphosphate reductase (Escherichia coli O6:H1 (strain CFT073 / ATCC 700928 / UPEC)).